The sequence spans 193 residues: Ion-translocating oxidoreductase complex subunit A (193 aa).

Transmembrane regions (helical) follow at residues 5–25 (LLLF…FLGL), 39–59 (MGMG…AWLI), 63–83 (ILIP…VIAV), 102–122 (LLGI…VALL), 134–154 (ALYG…FAAI), and 171–191 (AIAL…SGLV).

Belongs to the NqrDE/RnfAE family. In terms of assembly, the complex is composed of six subunits: RsxA, RsxB, RsxC, RsxD, RsxE and RsxG.

The protein localises to the cell inner membrane. Part of a membrane-bound complex that couples electron transfer with translocation of ions across the membrane. Required to maintain the reduced state of SoxR. The chain is Ion-translocating oxidoreductase complex subunit A from Shigella flexneri serotype 5b (strain 8401).